The chain runs to 484 residues: Probable glycine dehydrogenase (decarboxylating) subunit 2 (484 aa).

Lys-264 is modified (N6-(pyridoxal phosphate)lysine).

The protein belongs to the GcvP family. C-terminal subunit subfamily. The glycine cleavage system is composed of four proteins: P, T, L and H. In this organism, the P 'protein' is a heterodimer of two subunits. It depends on pyridoxal 5'-phosphate as a cofactor.

It carries out the reaction N(6)-[(R)-lipoyl]-L-lysyl-[glycine-cleavage complex H protein] + glycine + H(+) = N(6)-[(R)-S(8)-aminomethyldihydrolipoyl]-L-lysyl-[glycine-cleavage complex H protein] + CO2. Its function is as follows. The glycine cleavage system catalyzes the degradation of glycine. The P protein binds the alpha-amino group of glycine through its pyridoxal phosphate cofactor; CO(2) is released and the remaining methylamine moiety is then transferred to the lipoamide cofactor of the H protein. This is Probable glycine dehydrogenase (decarboxylating) subunit 2 from Legionella pneumophila (strain Corby).